A 291-amino-acid polypeptide reads, in one-letter code: ATP synthase gamma chain (291 aa).

This sequence belongs to the ATPase gamma chain family. In terms of assembly, F-type ATPases have 2 components, CF(1) - the catalytic core - and CF(0) - the membrane proton channel. CF(1) has five subunits: alpha(3), beta(3), gamma(1), delta(1), epsilon(1). CF(0) has three main subunits: a, b and c.

Its subcellular location is the cell inner membrane. Its function is as follows. Produces ATP from ADP in the presence of a proton gradient across the membrane. The gamma chain is believed to be important in regulating ATPase activity and the flow of protons through the CF(0) complex. This chain is ATP synthase gamma chain, found in Chlorobium limicola (strain DSM 245 / NBRC 103803 / 6330).